The primary structure comprises 188 residues: Peptidyl-tRNA hydrolase (188 aa).

Tyrosine 14 contributes to the tRNA binding site. Histidine 19 serves as the catalytic Proton acceptor. 3 residues coordinate tRNA: tyrosine 64, asparagine 66, and asparagine 112.

It belongs to the PTH family. As to quaternary structure, monomer.

It localises to the cytoplasm. It catalyses the reaction an N-acyl-L-alpha-aminoacyl-tRNA + H2O = an N-acyl-L-amino acid + a tRNA + H(+). Hydrolyzes ribosome-free peptidyl-tRNAs (with 1 or more amino acids incorporated), which drop off the ribosome during protein synthesis, or as a result of ribosome stalling. Its function is as follows. Catalyzes the release of premature peptidyl moieties from peptidyl-tRNA molecules trapped in stalled 50S ribosomal subunits, and thus maintains levels of free tRNAs and 50S ribosomes. This Clostridium perfringens (strain ATCC 13124 / DSM 756 / JCM 1290 / NCIMB 6125 / NCTC 8237 / Type A) protein is Peptidyl-tRNA hydrolase.